Here is a 249-residue protein sequence, read N- to C-terminus: ATP synthase subunit a (249 aa).

A run of 6 helical transmembrane segments spans residues 30 to 50, 84 to 104, 114 to 134, 143 to 163, 196 to 216, and 221 to 241; these read SAYM…GVAG, FFPL…VGII, LIVT…YGFY, IFVP…IEVF, LLAG…GMVI, and LELL…CIYL.

The protein belongs to the ATPase A chain family. F-type ATPases have 2 components, CF(1) - the catalytic core - and CF(0) - the membrane proton channel. CF(1) has five subunits: alpha(3), beta(3), gamma(1), delta(1), epsilon(1). CF(0) has four main subunits: a, b, b' and c.

The protein localises to the cell inner membrane. Functionally, key component of the proton channel; it plays a direct role in the translocation of protons across the membrane. In Rhodopseudomonas palustris (strain BisB18), this protein is ATP synthase subunit a.